Consider the following 399-residue polypeptide: STOREKEEPER protein (399 aa).

Disordered stretches follow at residues 1-160 (MAPK…RSLW) and 250-301 (GISN…EEQQ). The segment covering 20 to 54 (EEQELVEESQEEEEQQSREEEGEEESGEETEEDEE) has biased composition (acidic residues). The span at 69-79 (KLVQTPQKPQF) shows a compositional bias: polar residues. 2 stretches are compositionally biased toward low complexity: residues 80–100 (SSES…SGNS) and 116–125 (AAKAATPSKP). 2 stretches are compositionally biased toward basic and acidic residues: residues 143 to 152 (KIAEEEEKKS) and 270 to 299 (KTVE…KEEE).

This sequence belongs to the GeBP family. In terms of tissue distribution, expressed in tubers and in leaves treated with sucrose.

It is found in the nucleus. May act as a transcriptional regulator. Binds specifically to the B-box motif, a promoter element that is required for the tuber-specific and sucrose inducible expression of the patatin gene. The polypeptide is STOREKEEPER protein (Solanum tuberosum (Potato)).